Reading from the N-terminus, the 183-residue chain is Ribosome rescue factor SmrB (183 aa).

The Smr domain maps to 98-173 (LDLHGLTQLQ…GDAALLVLIE (76 aa)).

Belongs to the SmrB family. As to quaternary structure, associates with collided ribosomes, but not with correctly translating polysomes.

Functionally, acts as a ribosome collision sensor. Detects stalled/collided disomes (pairs of ribosomes where the leading ribosome is stalled and a second ribosome has collided with it) and endonucleolytically cleaves mRNA at the 5' boundary of the stalled ribosome. Stalled/collided disomes form a new interface (primarily via the 30S subunits) that binds SmrB. Cleaved mRNA becomes available for tmRNA ligation, leading to ribosomal subunit dissociation and rescue of stalled ribosomes. The protein is Ribosome rescue factor SmrB of Salmonella paratyphi A (strain ATCC 9150 / SARB42).